A 265-amino-acid chain; its full sequence is Thiazole synthase (265 aa).

Residue Lys107 is the Schiff-base intermediate with DXP of the active site. 1-deoxy-D-xylulose 5-phosphate contacts are provided by residues Gly168, 194–195 (AG), and 216–217 (NT).

Belongs to the ThiG family. In terms of assembly, homotetramer. Forms heterodimers with either ThiH or ThiS.

It is found in the cytoplasm. It catalyses the reaction [ThiS sulfur-carrier protein]-C-terminal-Gly-aminoethanethioate + 2-iminoacetate + 1-deoxy-D-xylulose 5-phosphate = [ThiS sulfur-carrier protein]-C-terminal Gly-Gly + 2-[(2R,5Z)-2-carboxy-4-methylthiazol-5(2H)-ylidene]ethyl phosphate + 2 H2O + H(+). Its pathway is cofactor biosynthesis; thiamine diphosphate biosynthesis. In terms of biological role, catalyzes the rearrangement of 1-deoxy-D-xylulose 5-phosphate (DXP) to produce the thiazole phosphate moiety of thiamine. Sulfur is provided by the thiocarboxylate moiety of the carrier protein ThiS. In vitro, sulfur can be provided by H(2)S. This is Thiazole synthase from Pseudomonas aeruginosa (strain LESB58).